Consider the following 171-residue polypeptide: Co-chaperone protein HscB homolog (171 aa).

One can recognise a J domain in the interval 2–74 (NHFELFGLPN…VTRAEYILSE (73 aa)).

The protein belongs to the HscB family. As to quaternary structure, interacts with HscA and stimulates its ATPase activity.

Its function is as follows. Co-chaperone involved in the maturation of iron-sulfur cluster-containing proteins. Seems to help targeting proteins to be folded toward HscA. The chain is Co-chaperone protein HscB homolog from Aliivibrio salmonicida (strain LFI1238) (Vibrio salmonicida (strain LFI1238)).